The primary structure comprises 313 residues: Ribosomal RNA small subunit methyltransferase H (313 aa).

S-adenosyl-L-methionine is bound by residues 35–37, Asp-55, Phe-80, Asp-102, and Gln-109; that span reads GGH.

Belongs to the methyltransferase superfamily. RsmH family.

It localises to the cytoplasm. The enzyme catalyses cytidine(1402) in 16S rRNA + S-adenosyl-L-methionine = N(4)-methylcytidine(1402) in 16S rRNA + S-adenosyl-L-homocysteine + H(+). Functionally, specifically methylates the N4 position of cytidine in position 1402 (C1402) of 16S rRNA. This is Ribosomal RNA small subunit methyltransferase H from Shewanella sp. (strain MR-4).